The sequence spans 154 residues: 3-hydroxyacyl-[acyl-carrier-protein] dehydratase FabZ (154 aa).

H55 is a catalytic residue.

This sequence belongs to the thioester dehydratase family. FabZ subfamily.

The protein localises to the cytoplasm. It carries out the reaction a (3R)-hydroxyacyl-[ACP] = a (2E)-enoyl-[ACP] + H2O. Functionally, involved in unsaturated fatty acids biosynthesis. Catalyzes the dehydration of short chain beta-hydroxyacyl-ACPs and long chain saturated and unsaturated beta-hydroxyacyl-ACPs. The chain is 3-hydroxyacyl-[acyl-carrier-protein] dehydratase FabZ from Nitratidesulfovibrio vulgaris (strain DSM 19637 / Miyazaki F) (Desulfovibrio vulgaris).